A 287-amino-acid polypeptide reads, in one-letter code: 2-dehydro-3-deoxyphosphooctonate aldolase (287 aa).

Belongs to the KdsA family.

It localises to the cytoplasm. The enzyme catalyses D-arabinose 5-phosphate + phosphoenolpyruvate + H2O = 3-deoxy-alpha-D-manno-2-octulosonate-8-phosphate + phosphate. It participates in carbohydrate biosynthesis; 3-deoxy-D-manno-octulosonate biosynthesis; 3-deoxy-D-manno-octulosonate from D-ribulose 5-phosphate: step 2/3. The protein operates within bacterial outer membrane biogenesis; lipopolysaccharide biosynthesis. This Rhodopseudomonas palustris (strain TIE-1) protein is 2-dehydro-3-deoxyphosphooctonate aldolase.